The sequence spans 356 residues: 3-dehydroquinate synthase (356 aa).

NAD(+) is bound by residues 69-74 (DGEKFK), 103-107 (GVIGD), 127-128 (TT), Lys140, Lys149, and 167-170 (CLKT). Zn(2+) is bound by residues Glu182, His245, and His262.

It belongs to the sugar phosphate cyclases superfamily. Dehydroquinate synthase family. Requires Co(2+) as cofactor. It depends on Zn(2+) as a cofactor. NAD(+) serves as cofactor.

It localises to the cytoplasm. It catalyses the reaction 7-phospho-2-dehydro-3-deoxy-D-arabino-heptonate = 3-dehydroquinate + phosphate. Its pathway is metabolic intermediate biosynthesis; chorismate biosynthesis; chorismate from D-erythrose 4-phosphate and phosphoenolpyruvate: step 2/7. Catalyzes the conversion of 3-deoxy-D-arabino-heptulosonate 7-phosphate (DAHP) to dehydroquinate (DHQ). This Psychromonas ingrahamii (strain DSM 17664 / CCUG 51855 / 37) protein is 3-dehydroquinate synthase.